Here is a 392-residue protein sequence, read N- to C-terminus: GTPase Obg (392 aa).

The Obg domain occupies 1-159 (MKFVDEATIL…RDLQLELMLL (159 aa)). Residues 127 to 148 (NTRFKSSVNRTPRQKTMGTPGD) form a disordered region. Over residues 129–143 (RFKSSVNRTPRQKTM) the composition is skewed to polar residues. The OBG-type G domain maps to 160–333 (ADVGMLGMPN…LCWDVMTFII (174 aa)). GTP contacts are provided by residues 166–173 (GMPNAGKS), 191–195 (FTTLV), 213–216 (DIPG), 283–286 (NKID), and 314–316 (SAA). The Mg(2+) site is built by S173 and T193. The segment covering 362–386 (EEAEAEAEDDEDWDDDWDEDDEEGV) has biased composition (acidic residues). Residues 362–392 (EEAEAEAEDDEDWDDDWDEDDEEGVEFIYKR) form a disordered region.

Belongs to the TRAFAC class OBG-HflX-like GTPase superfamily. OBG GTPase family. As to quaternary structure, monomer. Mg(2+) serves as cofactor.

Its subcellular location is the cytoplasm. In terms of biological role, an essential GTPase which binds GTP, GDP and possibly (p)ppGpp with moderate affinity, with high nucleotide exchange rates and a fairly low GTP hydrolysis rate. Plays a role in control of the cell cycle, stress response, ribosome biogenesis and in those bacteria that undergo differentiation, in morphogenesis control. The sequence is that of GTPase Obg from Klebsiella pneumoniae subsp. pneumoniae (strain ATCC 700721 / MGH 78578).